A 702-amino-acid chain; its full sequence is Pentatricopeptide repeat-containing protein At4g16390, chloroplastic (702 aa).

The transit peptide at 1–53 (MSFHHLCSSPSSLLHDPLPLCNLLSVYPKSTPRSFLSSYNPNSSHFHSRNLLQ) directs the protein to the chloroplast. PPR repeat units follow at residues 174-208 (EVIL…GIKP), 209-243 (DNAT…GCEP), 244-278 (DNVT…KWRI), 279-313 (DAVT…GVKP), 314-348 (NLVI…GFTP), 349-383 (NWST…GLSL), 384-414 (TVIL…MKNC), 420-454 (DSWT…GFEP), and 455-489 (TLFV…GITP). In terms of domain architecture, Smr spans 603 to 688 (LHLKSLSLGA…WFLTTSVAAK (86 aa)).

It belongs to the PPR family. P subfamily. As to expression, expressed in leaves and flowers and at lower levels in stems and flower buds.

The protein resides in the plastid. The protein localises to the chloroplast. Its function is as follows. Involved in chloroplast RNA processing. Can bind RNA. Involved in chloroplast development. Involved in chloroplast ribosomal RNA (rRNA) processing and/or translation. Required for FtsH-mediated chloroplast biogenesis. Involved in translation and accumulation of chloroplast ATP synthase subunits. In Arabidopsis thaliana (Mouse-ear cress), this protein is Pentatricopeptide repeat-containing protein At4g16390, chloroplastic.